Reading from the N-terminus, the 27-residue chain is Toxin TdII-4 (27 aa).

Residues 1-27 enclose the LCN-type CS-alpha/beta domain; sequence KDGYLMEPNGCKLGCLTRPAKYCWXEE.

Belongs to the long (4 C-C) scorpion toxin superfamily. Sodium channel inhibitor family. Beta subfamily. In terms of tissue distribution, expressed by the venom gland.

It is found in the secreted. Its function is as follows. Beta toxins bind voltage-independently at site-4 of sodium channels (Nav) and shift the voltage of activation toward more negative potentials thereby affecting sodium channel activation and promoting spontaneous and repetitive firing. This toxin is active against mammals and also affects neuromuscular preparations of frog. The sequence is that of Toxin TdII-4 from Tityus discrepans (Venezuelan scorpion).